The sequence spans 468 residues: MSARTLFDKVWDLHTISVLPSGQTQLFIGLHLIHEVTSPQAFAMLKERGLRVMYPERTVATVDHIVPTENQQRPFQDSLAEEMMQALEVNTKAHNIRFHPIGSGNQGIVHVIAPEQGLTQPGMTIACGDSHTSTHGAFGAIAFGIGTSQVRDVLAAQSLSLNKLKVRKIEVNGDLAPGVYAKDVILHIIRKLGVKGGVGYAYEYAGSTFVAMNMEERMTVCNMSIEGGARCGYINPDEVTFAYLKGREFAPQGEDWDKAVQWWRSIASEPDAVYDDVVSFRAEDIEPTVTWGITPGQGIGISEPVPTLDSLNPDDQAIASEAYKYMQFQPGQPLKGTKVDVCFIGSCTNGRLSDLEEAAKVAKGHQVAAGVKAFVVPGSEQVKQQAEAAGLDQIFQAAGFEWREAGCSMCLAMNPDKLQGDQLSASSSNRNFKGRQGSASGRTLLMSPAMVAAAAITGQVADVREVLG.

The [4Fe-4S] cluster site is built by C347, C407, and C410.

It belongs to the aconitase/IPM isomerase family. LeuC type 1 subfamily. In terms of assembly, heterodimer of LeuC and LeuD. [4Fe-4S] cluster is required as a cofactor.

The catalysed reaction is (2R,3S)-3-isopropylmalate = (2S)-2-isopropylmalate. It participates in amino-acid biosynthesis; L-leucine biosynthesis; L-leucine from 3-methyl-2-oxobutanoate: step 2/4. Functionally, catalyzes the isomerization between 2-isopropylmalate and 3-isopropylmalate, via the formation of 2-isopropylmaleate. The sequence is that of 3-isopropylmalate dehydratase large subunit from Synechocystis sp. (strain ATCC 27184 / PCC 6803 / Kazusa).